Consider the following 316-residue polypeptide: MNDVSKASLPKAIFLMGPTASGKTALAIELRKVLPVELISVDSALIYRGMDIGTAKPNADELKAAPHRLLDIRDPSQAYSAADFRRDALEQMAEITAAGRIPLLVGGTMLYFKALLEGLSPLPSADPEVRSRIEQQAAELGWEALHQQLQEIDPVAAARIHPNDPQRLSRALEVFFISGKTLTELTQTSGDALPYQVHQFAIAPASRELLHQRIELRFHQMLASGFEAEVRALFARGDLHTDLPSIRCVGYRQMWSYIEGEISYDEMVYRGVCATRQLAKRQMTWLRGWEGVRWLDSENPDRARKEVLQVVGAIAD.

17–24 is a binding site for ATP; that stretch reads GPTASGKT. 19 to 24 contacts substrate; the sequence is TASGKT. Interaction with substrate tRNA regions lie at residues 42 to 45, 166 to 170, and 247 to 252; these read DSAL, QRLSR, and RCVGYR.

This sequence belongs to the IPP transferase family. Monomer. Requires Mg(2+) as cofactor.

The enzyme catalyses adenosine(37) in tRNA + dimethylallyl diphosphate = N(6)-dimethylallyladenosine(37) in tRNA + diphosphate. Functionally, catalyzes the transfer of a dimethylallyl group onto the adenine at position 37 in tRNAs that read codons beginning with uridine, leading to the formation of N6-(dimethylallyl)adenosine (i(6)A). The sequence is that of tRNA dimethylallyltransferase from Salmonella newport (strain SL254).